Reading from the N-terminus, the 88-residue chain is MANSAQARKRARQATKARAHNASLRSRLRTAIKAVRKAIVGGDKAAAQAVFRTSMSTIDSVADKKIIHKNKAARHKSRLSAAVKAMAA.

The segment at 1-25 is disordered; that stretch reads MANSAQARKRARQATKARAHNASLR. Over residues 7 to 19 the composition is skewed to basic residues; it reads ARKRARQATKARA.

Belongs to the bacterial ribosomal protein bS20 family.

Binds directly to 16S ribosomal RNA. The protein is Small ribosomal subunit protein bS20 of Azoarcus sp. (strain BH72).